The chain runs to 239 residues: Large ribosomal subunit protein uL3 (239 aa).

Glutamine 151 carries the post-translational modification N5-methylglutamine.

Belongs to the universal ribosomal protein uL3 family. As to quaternary structure, part of the 50S ribosomal subunit. Forms a cluster with proteins L14 and L19. Methylated by PrmB.

Its function is as follows. One of the primary rRNA binding proteins, it binds directly near the 3'-end of the 23S rRNA, where it nucleates assembly of the 50S subunit. The sequence is that of Large ribosomal subunit protein uL3 from Ruegeria sp. (strain TM1040) (Silicibacter sp.).